Reading from the N-terminus, the 341-residue chain is S-adenosylmethionine:tRNA ribosyltransferase-isomerase (341 aa).

The protein belongs to the QueA family. Monomer.

Its subcellular location is the cytoplasm. The catalysed reaction is 7-aminomethyl-7-carbaguanosine(34) in tRNA + S-adenosyl-L-methionine = epoxyqueuosine(34) in tRNA + adenine + L-methionine + 2 H(+). It participates in tRNA modification; tRNA-queuosine biosynthesis. In terms of biological role, transfers and isomerizes the ribose moiety from AdoMet to the 7-aminomethyl group of 7-deazaguanine (preQ1-tRNA) to give epoxyqueuosine (oQ-tRNA). The sequence is that of S-adenosylmethionine:tRNA ribosyltransferase-isomerase from Alkaliphilus metalliredigens (strain QYMF).